We begin with the raw amino-acid sequence, 502 residues long: C2H2-type transcription factor MSN2 (502 aa).

2 C2H2-type zinc fingers span residues 385 to 408 (FVCH…RSLH) and 414 to 436 (FACG…SRIH).

It localises to the nucleus. Its function is as follows. Key downstream transcription factor in the HOG1-MAPK pathway. Plays crucial roles in the regulation of growth, conidiation, trap development and fatty acid metabolism. Negatively regulates secondary metabolism such as arthrobotrisins biosynthesis.Also regulates autophagy and endocytosis. The protein is C2H2-type transcription factor MSN2 of Arthrobotrys oligospora (strain ATCC 24927 / CBS 115.81 / DSM 1491) (Nematode-trapping fungus).